We begin with the raw amino-acid sequence, 141 residues long: Large ribosomal subunit protein uL11 (141 aa).

It belongs to the universal ribosomal protein uL11 family. As to quaternary structure, part of the ribosomal stalk of the 50S ribosomal subunit. Interacts with L10 and the large rRNA to form the base of the stalk. L10 forms an elongated spine to which L12 dimers bind in a sequential fashion forming a multimeric L10(L12)X complex. In terms of processing, one or more lysine residues are methylated.

In terms of biological role, forms part of the ribosomal stalk which helps the ribosome interact with GTP-bound translation factors. This Lactococcus lactis subsp. cremoris (strain MG1363) protein is Large ribosomal subunit protein uL11.